The following is a 209-amino-acid chain: Uracil phosphoribosyltransferase (209 aa).

5-phospho-alpha-D-ribose 1-diphosphate-binding positions include arginine 79, arginine 104, and aspartate 131–serine 139. Uracil contacts are provided by residues isoleucine 194 and glycine 199–alanine 201. Aspartate 200 contacts 5-phospho-alpha-D-ribose 1-diphosphate.

Belongs to the UPRTase family. It depends on Mg(2+) as a cofactor.

It carries out the reaction UMP + diphosphate = 5-phospho-alpha-D-ribose 1-diphosphate + uracil. It participates in pyrimidine metabolism; UMP biosynthesis via salvage pathway; UMP from uracil: step 1/1. With respect to regulation, allosterically activated by GTP. Catalyzes the conversion of uracil and 5-phospho-alpha-D-ribose 1-diphosphate (PRPP) to UMP and diphosphate. This chain is Uracil phosphoribosyltransferase, found in Rhodococcus opacus (strain B4).